The following is a 377-amino-acid chain: D-alanine--D-alanine ligase (377 aa).

The ATP-grasp domain maps to 141–347 (KRILNQAGIR…YSELIDRLIQ (207 aa)). 171–226 (KEELGDLVFVKPAKQGSSVGIHKVDTEEEYETAMKDAFTYDYKVLVEAGIKNPREI) provides a ligand contact to ATP. Residues Asp-301, Glu-314, and Asn-316 each contribute to the Mg(2+) site.

The protein belongs to the D-alanine--D-alanine ligase family. It depends on Mg(2+) as a cofactor. The cofactor is Mn(2+).

Its subcellular location is the cytoplasm. The enzyme catalyses 2 D-alanine + ATP = D-alanyl-D-alanine + ADP + phosphate + H(+). Its pathway is cell wall biogenesis; peptidoglycan biosynthesis. Cell wall formation. The chain is D-alanine--D-alanine ligase from Limosilactobacillus fermentum (strain NBRC 3956 / LMG 18251) (Lactobacillus fermentum).